The following is a 40-amino-acid chain: Potassium channel toxin alpha-KTx 12.2 (40 aa).

Cystine bridges form between Cys2–Cys5, Cys10–Cys31, Cys16–Cys36, and Cys20–Cys38.

It belongs to the short scorpion toxin superfamily. Potassium channel inhibitor family. Alpha-KTx 12 subfamily. Expressed by the venom gland.

Its subcellular location is the secreted. Inhibits high conductance calcium-activated potassium channels. Reversibly inhibits Shaker B potassium channels. This is Potassium channel toxin alpha-KTx 12.2 from Tityus trivittatus (Argentinean scorpion).